Reading from the N-terminus, the 228-residue chain is Cytochrome c oxidase subunit 2 (228 aa).

Topologically, residues 1-14 (MPHASQLSLQEAMG) are mitochondrial intermembrane. A helical membrane pass occupies residues 15–45 (PTMEEVIFLHDHVLLLTCLMTMVITMFTLTA). At 46–59 (TTTALTHNDPTEEV) the chain is on the mitochondrial matrix side. Residues 60 to 87 (EQLEAAWTVAPIMILILTALPSVRSLYL) traverse the membrane as a helical segment. Over 88-228 (MEEVFNPYLT…HFEQWLISEQ (141 aa)) the chain is Mitochondrial intermembrane. Cu cation is bound by residues His162, Cys197, Glu199, Cys201, His205, and Met208. Position 199 (Glu199) interacts with Mg(2+).

This sequence belongs to the cytochrome c oxidase subunit 2 family. In terms of assembly, component of the cytochrome c oxidase (complex IV, CIV), a multisubunit enzyme composed of 14 subunits. The complex is composed of a catalytic core of 3 subunits MT-CO1, MT-CO2 and MT-CO3, encoded in the mitochondrial DNA, and 11 supernumerary subunits COX4I, COX5A, COX5B, COX6A, COX6B, COX6C, COX7A, COX7B, COX7C, COX8 and NDUFA4, which are encoded in the nuclear genome. The complex exists as a monomer or a dimer and forms supercomplexes (SCs) in the inner mitochondrial membrane with NADH-ubiquinone oxidoreductase (complex I, CI) and ubiquinol-cytochrome c oxidoreductase (cytochrome b-c1 complex, complex III, CIII), resulting in different assemblies (supercomplex SCI(1)III(2)IV(1) and megacomplex MCI(2)III(2)IV(2)). Found in a complex with TMEM177, COA6, COX18, COX20, SCO1 and SCO2. Interacts with TMEM177 in a COX20-dependent manner. Interacts with COX20. Interacts with COX16. It depends on Cu cation as a cofactor.

The protein localises to the mitochondrion inner membrane. The enzyme catalyses 4 Fe(II)-[cytochrome c] + O2 + 8 H(+)(in) = 4 Fe(III)-[cytochrome c] + 2 H2O + 4 H(+)(out). Component of the cytochrome c oxidase, the last enzyme in the mitochondrial electron transport chain which drives oxidative phosphorylation. The respiratory chain contains 3 multisubunit complexes succinate dehydrogenase (complex II, CII), ubiquinol-cytochrome c oxidoreductase (cytochrome b-c1 complex, complex III, CIII) and cytochrome c oxidase (complex IV, CIV), that cooperate to transfer electrons derived from NADH and succinate to molecular oxygen, creating an electrochemical gradient over the inner membrane that drives transmembrane transport and the ATP synthase. Cytochrome c oxidase is the component of the respiratory chain that catalyzes the reduction of oxygen to water. Electrons originating from reduced cytochrome c in the intermembrane space (IMS) are transferred via the dinuclear copper A center (CU(A)) of subunit 2 and heme A of subunit 1 to the active site in subunit 1, a binuclear center (BNC) formed by heme A3 and copper B (CU(B)). The BNC reduces molecular oxygen to 2 water molecules using 4 electrons from cytochrome c in the IMS and 4 protons from the mitochondrial matrix. The polypeptide is Cytochrome c oxidase subunit 2 (MT-CO2) (Lycodon semicarinatus (Ryukyu odd-tooth snake)).